The sequence spans 407 residues: Transmembrane protein 184B (407 aa).

Residues Met1–Pro28 show a composition bias toward low complexity. The tract at residues Met1–Ser31 is disordered. Helical transmembrane passes span Phe40 to Ile60, Ile84 to Asn104, Phe121 to Met141, Leu178 to Gly198, Val214 to Phe234, Phe249 to Leu269, and Val290 to Leu310. The disordered stretch occupies residues Thr369–Asn395. A phosphoserine mark is found at Ser388, Ser402, and Ser403.

It belongs to the TMEM184 family.

It localises to the membrane. Its function is as follows. May activate the MAP kinase signaling pathway. In Mus musculus (Mouse), this protein is Transmembrane protein 184B (Tmem184b).